A 790-amino-acid polypeptide reads, in one-letter code: Probable quinate dehydrogenase (quinone) (790 aa).

4 helical membrane passes run G22 to L42, A48 to L68, L77 to L94, and A106 to V126. Residues R171 to Q200 form a disordered region. Residues G174 to G187 are compositionally biased toward low complexity.

The protein belongs to the bacterial PQQ dehydrogenase family. Pyrroloquinoline quinone is required as a cofactor.

The protein resides in the cell membrane. It carries out the reaction L-quinate + a quinone = 3-dehydroquinate + a quinol. The protein operates within aromatic compound metabolism; 3,4-dihydroxybenzoate biosynthesis; 3-dehydroquinate from D-quinate (PQQ route): step 1/1. This chain is Probable quinate dehydrogenase (quinone) (qumA), found in Xanthomonas campestris pv. juglandis (Xanthomonas arboricola pv. juglandis).